Here is a 493-residue protein sequence, read N- to C-terminus: Transmembrane protein 145 (493 aa).

The chain crosses the membrane as a helical span at residues 9–29 (LRRLLPPLLLLLLSLPPRARA). Asparagine 35 carries an N-linked (GlcNAc...) asparagine glycan. The next 7 membrane-spanning stretches (helical) occupy residues 175-195 (VTFL…GYLL), 207-227 (MFMA…IYWG), 241-261 (ILAK…LILL), 282-302 (VYMT…AEFF), 318-338 (GLIG…LVSL), 349-369 (VPFF…ALIA), and 381-401 (IVNG…LIMT). Asparagine 444 carries N-linked (GlcNAc...) asparagine glycosylation. The disordered stretch occupies residues 464–493 (PATSPLPRAAPDSGLPLFRDLRPPGPLRDL).

It is found in the membrane. In Homo sapiens (Human), this protein is Transmembrane protein 145 (TMEM145).